The chain runs to 965 residues: Klaroid protein (965 aa).

The segment at 1–20 (MSENTYQIETRRRSRSKTPF) is disordered. A run of 2 helical transmembrane segments spans residues 303 to 323 (TIGG…GSVL) and 343 to 363 (FLIF…LLLQ). A coiled-coil region spans residues 585-612 (SSDAEVQIERLNREIAFIKLALSDKQAE). The SUN domain maps to 801–963 (GGQILSTRCT…YRFRVHGKPP (163 aa)).

As to quaternary structure, core component of the LINC complex which is composed of inner nuclear membrane SUN domain-containing proteins coupled to outer nuclear membrane KASH domain-containing nesprins. Expressed in all cells in the eye disk.

Its subcellular location is the membrane. The protein localises to the cytoplasm. It is found in the cytoskeleton. The protein resides in the microtubule organizing center. It localises to the perinuclear region. In terms of biological role, component of the LINC (LInker of Nucleoskeleton and Cytoskeleton) complex involved in the connection between the nuclear lamina and the cytoskeleton. Is required to nuclear migration in eye and to anchor klar in the nuclear membrane. This chain is Klaroid protein, found in Drosophila melanogaster (Fruit fly).